Here is a 148-residue protein sequence, read N- to C-terminus: Lysozyme C (148 aa).

Positions 1–18 (MKALTILGLVLLSVTVQG) are cleaved as a signal peptide. The C-type lysozyme domain maps to 19-148 (KIFERCELAR…VSQYVKGCGV (130 aa)). 4 disulfide bridges follow: cysteine 24–cysteine 146, cysteine 48–cysteine 134, cysteine 83–cysteine 99, and cysteine 95–cysteine 113. Residues glutamate 53 and aspartate 71 contribute to the active site.

Belongs to the glycosyl hydrolase 22 family. In terms of assembly, monomer.

It localises to the secreted. It carries out the reaction Hydrolysis of (1-&gt;4)-beta-linkages between N-acetylmuramic acid and N-acetyl-D-glucosamine residues in a peptidoglycan and between N-acetyl-D-glucosamine residues in chitodextrins.. Functionally, lysozymes have primarily a bacteriolytic function; those in tissues and body fluids are associated with the monocyte-macrophage system and enhance the activity of immunoagents. Also plays a role in digestion in this species. The sequence is that of Lysozyme C (LYZ) from Semnopithecus entellus (Northern plains gray langur).